The following is a 152-amino-acid chain: Large ribosomal subunit protein uL13 (152 aa).

This sequence belongs to the universal ribosomal protein uL13 family. Part of the 50S ribosomal subunit.

In terms of biological role, this protein is one of the early assembly proteins of the 50S ribosomal subunit, although it is not seen to bind rRNA by itself. It is important during the early stages of 50S assembly. The protein is Large ribosomal subunit protein uL13 of Wolbachia pipientis subsp. Culex pipiens (strain wPip).